We begin with the raw amino-acid sequence, 144 residues long: Endoribonuclease YbeY (144 aa).

Zn(2+)-binding residues include histidine 108, histidine 112, and histidine 118.

This sequence belongs to the endoribonuclease YbeY family. Zn(2+) is required as a cofactor.

The protein resides in the cytoplasm. Single strand-specific metallo-endoribonuclease involved in late-stage 70S ribosome quality control and in maturation of the 3' terminus of the 16S rRNA. This Phytoplasma australiense protein is Endoribonuclease YbeY.